The primary structure comprises 776 residues: Protein SEY1 (776 aa).

Over 1 to 681 (MADRSAIQLI…KRSIITTRTH (681 aa)) the chain is Cytoplasmic. One can recognise a GB1/RHD3-type G domain in the interval 34-263 (GLDYHVISVF…TENYYFKPQY (230 aa)). 44–51 (GSQSSGKS) is a GTP binding site. The chain crosses the membrane as a helical span at residues 682-702 (IPPWIYVLLAVLGWNEFVAVI). Over 703–705 (RNP) the chain is Lumenal. Residues 706–726 (LFVTLTLILGATFFVIHKFGL) form a helical membrane-spanning segment. Residues 727–776 (WGPVVNVVQSAVGETRTAIKDKLRQFVVEDHEVKESFEMKDFSKNEQKEK) lie on the Cytoplasmic side of the membrane.

It belongs to the TRAFAC class dynamin-like GTPase superfamily. GB1/RHD3 GTPase family. RHD3 subfamily. In terms of assembly, interacts with RTN1 and YOP1; GTP binding is not required for these interactions.

Its subcellular location is the endoplasmic reticulum membrane. Functionally, cooperates with the reticulon proteins RTN1 and RTN2 and the tubule-shaping DP1 family protein YOP1 to generate and maintain the structure of the tubular endoplasmic reticulum network. Has GTPase activity, which is required for its function in ER organization. This is Protein SEY1 from Saccharomyces cerevisiae (strain AWRI1631) (Baker's yeast).